The chain runs to 108 residues: Phosphoribosyl-ATP pyrophosphatase (108 aa).

It belongs to the PRA-PH family.

The protein localises to the cytoplasm. It carries out the reaction 1-(5-phospho-beta-D-ribosyl)-ATP + H2O = 1-(5-phospho-beta-D-ribosyl)-5'-AMP + diphosphate + H(+). It functions in the pathway amino-acid biosynthesis; L-histidine biosynthesis; L-histidine from 5-phospho-alpha-D-ribose 1-diphosphate: step 2/9. The protein is Phosphoribosyl-ATP pyrophosphatase of Chromobacterium violaceum (strain ATCC 12472 / DSM 30191 / JCM 1249 / CCUG 213 / NBRC 12614 / NCIMB 9131 / NCTC 9757 / MK).